The primary structure comprises 62 residues: LECHNQQSSQTPTTTDCSGGETNCYKKWWSDHRGTIIERGCGCPTVKKGIELNCCTTDRCNN.

A disordered region spans residues 1–20 (LECHNQQSSQTPTTTDCSGG). 4 cysteine pairs are disulfide-bonded: cysteine 3/cysteine 24, cysteine 17/cysteine 41, cysteine 43/cysteine 54, and cysteine 55/cysteine 60.

It belongs to the three-finger toxin family. Short-chain subfamily. Type I alpha-neurotoxin sub-subfamily. In terms of tissue distribution, expressed by the venom gland.

The protein resides in the secreted. Its function is as follows. Nicotinic acetylcholine receptor antagonist. Binds to muscle nicotinic acetylcholine receptor (nAChR) and inhibits acetylcholine from binding to the receptor, thereby impairing neuromuscular transmission. Produces peripheral paralysis by blocking neuromuscular transmission at the postsynaptic site. Induces concentration-dependent inhibition of indirect twitches and abolishes contractile responses of tissues to exogenous acetylcholine and carbachol, in the chick biventer cervicis nerve-muscle preparation at 100-300 nM (in vitro). Prior incubation of tissues with Indian polyvalent antivenom (1 ml/0.6 mg) prevents the neurotoxic effects at 100 nM (in vitro). Addition of Indian polyvalent antivenom (1 ml/0.6 mg) at the t90 time point does not reverse the neurotoxic effects (in vitro). Displays non-competitive antagonism of concentration-response curves to carbachol, with a pA2 of 8.01 (in vitro). This chain is Alpha-elapitoxin-Nn2a, found in Naja naja (Indian cobra).